The primary structure comprises 514 residues: ATP synthase subunit alpha (514 aa).

170–177 (GDRQIGKT) contacts ATP.

It belongs to the ATPase alpha/beta chains family. In terms of assembly, F-type ATPases have 2 components, CF(1) - the catalytic core - and CF(0) - the membrane proton channel. CF(1) has five subunits: alpha(3), beta(3), gamma(1), delta(1), epsilon(1). CF(0) has three main subunits: a(1), b(2) and c(9-12). The alpha and beta chains form an alternating ring which encloses part of the gamma chain. CF(1) is attached to CF(0) by a central stalk formed by the gamma and epsilon chains, while a peripheral stalk is formed by the delta and b chains.

The protein resides in the cell inner membrane. The enzyme catalyses ATP + H2O + 4 H(+)(in) = ADP + phosphate + 5 H(+)(out). In terms of biological role, produces ATP from ADP in the presence of a proton gradient across the membrane. The alpha chain is a regulatory subunit. The polypeptide is ATP synthase subunit alpha (Pseudomonas savastanoi pv. phaseolicola (strain 1448A / Race 6) (Pseudomonas syringae pv. phaseolicola (strain 1448A / Race 6))).